The primary structure comprises 887 residues: Tiger protein O1 (887 aa).

A signal peptide spans 1 to 21 (MEKKLLIIVIVFLFSTIQVFC). Residues 22–845 (RIDDKTFVIS…SLSKKSIILL (824 aa)) are Extracellular-facing. Asparagine 32, asparagine 70, asparagine 186, asparagine 207, asparagine 219, asparagine 259, asparagine 297, asparagine 314, asparagine 325, asparagine 338, asparagine 354, asparagine 393, asparagine 431, asparagine 588, asparagine 629, asparagine 652, asparagine 687, asparagine 710, asparagine 720, asparagine 730, asparagine 775, asparagine 788, asparagine 811, and asparagine 816 each carry an N-linked (GlcNAc...) asparagine glycan. The IPT/TIG 1 domain maps to 277–365 (NSVPYSKGGL…TNENKLLFNY (89 aa)). Positions 710–767 (NTSSINVNGGNLTIYGKNFYNVSNIKVEVDNQLKCNKIEFINLNSLTCFLPPFIETLF) constitute an IPT/TIG 2 domain. Residues 811–835 (NDTSENSTNDILNHEKNNNNQKDGS) form a disordered region. The helical transmembrane segment at 846–866 (SILLPSFIILIVSLAIVILVI) threads the bilayer. The Cytoplasmic portion of the chain corresponds to 867 to 887 (KRNKTKHSKNMSSKEKELMKQ).

It localises to the membrane. In Dictyostelium discoideum (Social amoeba), this protein is Tiger protein O1 (tgrO1).